The primary structure comprises 264 residues: Myozenin-2 (264 aa).

Residue arginine 53 is modified to Omega-N-methylarginine. The interval 98 to 134 (ESGSQQAPFTPPNTPDPRSPPNPENIAPGYSGPLKEI) is disordered. Position 101 is a phosphoserine (serine 101). Positions 106 to 120 (FTPPNTPDPRSPPNP) are enriched in pro residues. Threonine 107 and threonine 111 each carry phosphothreonine. Position 116 is a phosphoserine (serine 116).

The protein belongs to the myozenin family. As to quaternary structure, interacts via its C-terminus with spectrin repeats 3 and 4 of ACTN2. Interacts with ACTN1, LDB3, MYOT and PPP3CA.

It localises to the cytoplasm. The protein localises to the myofibril. Its subcellular location is the sarcomere. The protein resides in the z line. Myozenins may serve as intracellular binding proteins involved in linking Z line proteins such as alpha-actinin, gamma-filamin, TCAP/telethonin, LDB3/ZASP and localizing calcineurin signaling to the sarcomere. Plays an important role in the modulation of calcineurin signaling. May play a role in myofibrillogenesis. The polypeptide is Myozenin-2 (MYOZ2) (Bos taurus (Bovine)).